Consider the following 604-residue polypeptide: Putative O-acetyltransferase SAV0974 (604 aa).

A run of 11 helical transmembrane segments spans residues 15–35 (YMPG…IYHL), 43–63 (GFLG…SLLL), 85–105 (LLPA…LLKS), 150–170 (AIEE…LLTI), 176–196 (IGFI…FIYS), 212–232 (LQTL…KLKN), 240–260 (YVID…FFII), 267–287 (IYDG…ASVV), 310–330 (YSLY…YVDG), 332–352 (IPVY…ELSY), and 377–397 (FIRM…LVGA). Residues Ser-459, Asp-581, and His-584 contribute to the active site.

Belongs to the acyltransferase 3 family.

The protein resides in the cell membrane. In Staphylococcus aureus (strain Mu50 / ATCC 700699), this protein is Putative O-acetyltransferase SAV0974.